Here is a 25-residue protein sequence, read N- to C-terminus: M-poneritoxin-Nc2a (25 aa).

The protein belongs to the ponericin-L family. Expressed by the venom gland.

It is found in the secreted. The protein localises to the target cell membrane. Functionally, membrane-perturbating peptide with multiple activities. It is insecticidal, since it induces reversible paralysis in insects (L.cuprina) after 1 hour, but fails to kill them. It shows moderate antibacterial activity against some Gram-positive and Gram-negative bacteria. It is also antiparasitic, since it moderately inhibits the larval development of the major pathogenic nematode of ruminants (H.contortus, IC(50)=23.2 uM), but fails to reduce the motility of adult males of the other nematode B.malayi. It also shows moderate cytotoxic activity against HEK293 cells (EC(50)=48-57 uM) but does not induce hemolysis in human erythrocytes. It also causes a moderate increase in intracellular calcium concentration on neuronal and epithelial cell lines, which supports a non-specific membrane perturbation mechanism of action. The sequence is that of M-poneritoxin-Nc2a from Neoponera commutata (Large hunting ant).